The chain runs to 282 residues: Small ribosomal subunit protein uS3 (282 aa).

One can recognise a KH type-2 domain in the interval 43-111 (IRQLMSTGME…QVQLNILEVK (69 aa)). The segment at 218-282 (QQAASAPSRG…AAVATEGSDA (65 aa)) is disordered. Over residues 230-262 (PRRDGDDRGPRRENSGPRRDGGNLRSQRNDRNE) the composition is skewed to basic and acidic residues. Positions 263–276 (NAAVEAAPAAAAVA) are enriched in low complexity.

The protein belongs to the universal ribosomal protein uS3 family. Part of the 30S ribosomal subunit. Forms a tight complex with proteins S10 and S14.

In terms of biological role, binds the lower part of the 30S subunit head. Binds mRNA in the 70S ribosome, positioning it for translation. This Renibacterium salmoninarum (strain ATCC 33209 / DSM 20767 / JCM 11484 / NBRC 15589 / NCIMB 2235) protein is Small ribosomal subunit protein uS3.